The primary structure comprises 72 residues: Translation initiation factor IF-1 (72 aa).

The region spanning 1 to 72 is the S1-like domain; the sequence is MAKDDVIEVE…TRGRITYRYK (72 aa). Tyrosine 60 bears the Phosphotyrosine mark.

This sequence belongs to the IF-1 family. As to quaternary structure, component of the 30S ribosomal translation pre-initiation complex which assembles on the 30S ribosome in the order IF-2 and IF-3, IF-1 and N-formylmethionyl-tRNA(fMet); mRNA recruitment can occur at any time during PIC assembly.

It localises to the cytoplasm. In terms of biological role, one of the essential components for the initiation of protein synthesis. Stabilizes the binding of IF-2 and IF-3 on the 30S subunit to which N-formylmethionyl-tRNA(fMet) subsequently binds. Helps modulate mRNA selection, yielding the 30S pre-initiation complex (PIC). Upon addition of the 50S ribosomal subunit IF-1, IF-2 and IF-3 are released leaving the mature 70S translation initiation complex. The polypeptide is Translation initiation factor IF-1 (Geobacillus kaustophilus (strain HTA426)).